Consider the following 375-residue polypeptide: Anhydro-N-acetylmuramic acid kinase (375 aa).

Residue 12–19 coordinates ATP; the sequence is GTSLDGVD.

The protein belongs to the anhydro-N-acetylmuramic acid kinase family.

It catalyses the reaction 1,6-anhydro-N-acetyl-beta-muramate + ATP + H2O = N-acetyl-D-muramate 6-phosphate + ADP + H(+). It functions in the pathway amino-sugar metabolism; 1,6-anhydro-N-acetylmuramate degradation. Its pathway is cell wall biogenesis; peptidoglycan recycling. Catalyzes the specific phosphorylation of 1,6-anhydro-N-acetylmuramic acid (anhMurNAc) with the simultaneous cleavage of the 1,6-anhydro ring, generating MurNAc-6-P. Is required for the utilization of anhMurNAc either imported from the medium or derived from its own cell wall murein, and thus plays a role in cell wall recycling. The protein is Anhydro-N-acetylmuramic acid kinase of Variovorax paradoxus (strain S110).